Reading from the N-terminus, the 339-residue chain is UDP-N-acetylglucosamine--N-acetylmuramyl-(pentapeptide) pyrophosphoryl-undecaprenol N-acetylglucosamine transferase (339 aa).

Residues 11–13, asparagine 127, arginine 170, serine 188, isoleucine 235, and glutamine 280 each bind UDP-N-acetyl-alpha-D-glucosamine; that span reads TGG.

The protein belongs to the glycosyltransferase 28 family. MurG subfamily.

It localises to the cell inner membrane. It catalyses the reaction di-trans,octa-cis-undecaprenyl diphospho-N-acetyl-alpha-D-muramoyl-L-alanyl-D-glutamyl-meso-2,6-diaminopimeloyl-D-alanyl-D-alanine + UDP-N-acetyl-alpha-D-glucosamine = di-trans,octa-cis-undecaprenyl diphospho-[N-acetyl-alpha-D-glucosaminyl-(1-&gt;4)]-N-acetyl-alpha-D-muramoyl-L-alanyl-D-glutamyl-meso-2,6-diaminopimeloyl-D-alanyl-D-alanine + UDP + H(+). Its pathway is cell wall biogenesis; peptidoglycan biosynthesis. Its function is as follows. Cell wall formation. Catalyzes the transfer of a GlcNAc subunit on undecaprenyl-pyrophosphoryl-MurNAc-pentapeptide (lipid intermediate I) to form undecaprenyl-pyrophosphoryl-MurNAc-(pentapeptide)GlcNAc (lipid intermediate II). This is UDP-N-acetylglucosamine--N-acetylmuramyl-(pentapeptide) pyrophosphoryl-undecaprenol N-acetylglucosamine transferase from Thermotoga neapolitana (strain ATCC 49049 / DSM 4359 / NBRC 107923 / NS-E).